The primary structure comprises 128 residues: Fluoride-specific ion channel FluC (128 aa).

Helical transmembrane passes span 1–21 (MPER…GATA), 45–65 (LAGC…SLVS), 70–90 (LLLA…MYEI), and 99–119 (IFYS…CLYF). Na(+)-binding residues include Gly78 and Thr81.

Belongs to the fluoride channel Fluc/FEX (TC 1.A.43) family.

It localises to the cell inner membrane. It catalyses the reaction fluoride(in) = fluoride(out). Na(+) is not transported, but it plays an essential structural role and its presence is essential for fluoride channel function. Functionally, fluoride-specific ion channel. Important for reducing fluoride concentration in the cell, thus reducing its toxicity. This is Fluoride-specific ion channel FluC from Chlorobium phaeobacteroides (strain BS1).